Here is a 175-residue protein sequence, read N- to C-terminus: Adenine phosphoribosyltransferase (175 aa).

It belongs to the purine/pyrimidine phosphoribosyltransferase family. As to quaternary structure, homodimer.

It localises to the cytoplasm. The catalysed reaction is AMP + diphosphate = 5-phospho-alpha-D-ribose 1-diphosphate + adenine. It functions in the pathway purine metabolism; AMP biosynthesis via salvage pathway; AMP from adenine: step 1/1. In terms of biological role, catalyzes a salvage reaction resulting in the formation of AMP, that is energically less costly than de novo synthesis. The protein is Adenine phosphoribosyltransferase of Francisella tularensis subsp. tularensis (strain FSC 198).